A 530-amino-acid chain; its full sequence is Autoinducer-2 kinase (530 aa).

Belongs to the FGGY kinase family.

It localises to the cytoplasm. The catalysed reaction is (S)-4,5-dihydroxypentane-2,3-dione + ATP = (2S)-2-hydroxy-3,4-dioxopentyl phosphate + ADP + H(+). Functionally, catalyzes the phosphorylation of autoinducer-2 (AI-2) to phospho-AI-2, which subsequently inactivates the transcriptional regulator LsrR and leads to the transcription of the lsr operon. Phosphorylates the ring-open form of (S)-4,5-dihydroxypentane-2,3-dione (DPD), which is the precursor to all AI-2 signaling molecules, at the C5 position. This Escherichia coli (strain ATCC 8739 / DSM 1576 / NBRC 3972 / NCIMB 8545 / WDCM 00012 / Crooks) protein is Autoinducer-2 kinase.